A 1153-amino-acid chain; its full sequence is ATP-dependent helicase/deoxyribonuclease subunit B (1153 aa).

8-15 (GRAGSGKS) is a binding site for ATP. [4Fe-4S] cluster contacts are provided by cysteine 786, cysteine 1104, cysteine 1107, and cysteine 1113.

It belongs to the helicase family. AddB/RexB type 1 subfamily. In terms of assembly, heterodimer of AddA and AddB. The cofactor is Mg(2+). [4Fe-4S] cluster serves as cofactor.

In terms of biological role, the heterodimer acts as both an ATP-dependent DNA helicase and an ATP-dependent, dual-direction single-stranded exonuclease. Recognizes the chi site generating a DNA molecule suitable for the initiation of homologous recombination. The AddB subunit has 5' -&gt; 3' nuclease activity but not helicase activity. This chain is ATP-dependent helicase/deoxyribonuclease subunit B, found in Clostridium acetobutylicum (strain ATCC 824 / DSM 792 / JCM 1419 / IAM 19013 / LMG 5710 / NBRC 13948 / NRRL B-527 / VKM B-1787 / 2291 / W).